The following is a 331-amino-acid chain: Ketol-acid reductoisomerase (NADP(+)) (331 aa).

The KARI N-terminal Rossmann domain occupies 2–182 (ARMYYDEDAN…GGTRGGVLET (181 aa)). NADP(+) contacts are provided by residues 25 to 28 (YGSQ), serine 51, serine 53, and 83 to 86 (DEVQ). The active site involves histidine 108. Position 134 (glycine 134) interacts with NADP(+). The KARI C-terminal knotted domain occupies 183–328 (TFREETETDL…KDLRAMFSWL (146 aa)). Residues aspartate 191, glutamate 195, glutamate 227, and glutamate 231 each contribute to the Mg(2+) site. Serine 252 is a substrate binding site.

The protein belongs to the ketol-acid reductoisomerase family. It depends on Mg(2+) as a cofactor.

The catalysed reaction is (2R)-2,3-dihydroxy-3-methylbutanoate + NADP(+) = (2S)-2-acetolactate + NADPH + H(+). It carries out the reaction (2R,3R)-2,3-dihydroxy-3-methylpentanoate + NADP(+) = (S)-2-ethyl-2-hydroxy-3-oxobutanoate + NADPH + H(+). Its pathway is amino-acid biosynthesis; L-isoleucine biosynthesis; L-isoleucine from 2-oxobutanoate: step 2/4. It participates in amino-acid biosynthesis; L-valine biosynthesis; L-valine from pyruvate: step 2/4. In terms of biological role, involved in the biosynthesis of branched-chain amino acids (BCAA). Catalyzes an alkyl-migration followed by a ketol-acid reduction of (S)-2-acetolactate (S2AL) to yield (R)-2,3-dihydroxy-isovalerate. In the isomerase reaction, S2AL is rearranged via a Mg-dependent methyl migration to produce 3-hydroxy-3-methyl-2-ketobutyrate (HMKB). In the reductase reaction, this 2-ketoacid undergoes a metal-dependent reduction by NADPH to yield (R)-2,3-dihydroxy-isovalerate. The protein is Ketol-acid reductoisomerase (NADP(+)) of Trichormus variabilis (strain ATCC 29413 / PCC 7937) (Anabaena variabilis).